Reading from the N-terminus, the 224-residue chain is Urease accessory protein UreF (224 aa).

This sequence belongs to the UreF family. As to quaternary structure, ureD, UreF and UreG form a complex that acts as a GTP-hydrolysis-dependent molecular chaperone, activating the urease apoprotein by helping to assemble the nickel containing metallocenter of UreC. The UreE protein probably delivers the nickel.

The protein localises to the cytoplasm. In terms of biological role, required for maturation of urease via the functional incorporation of the urease nickel metallocenter. This chain is Urease accessory protein UreF, found in Azotobacter vinelandii (strain DJ / ATCC BAA-1303).